The following is a 62-amino-acid chain: GSTSYIYDTSAGSGTYAYIVDTGIITSHNGFNWAANDIISKSYSNYGTVLDIFAPGTSVLSS.

A Peptidase S8 domain is found at 1–62; that stretch reads GSTSYIYDTS…FAPGTSVLSS (62 aa). Catalysis depends on aspartate 21, which acts as the Charge relay system.

Its subcellular location is the secreted. Inhibited by phenylmethanesulfonyl fluoride (PMSF) and chymostatin (CST), but not by Bowman-Birk type trypsin-chymotrypsin inhibitor (BBI). In terms of biological role, serine protease. May be involved in the invasion of grains and hydrolysis of grain proteins. In Fusarium culmorum, this protein is Alkaline proteinase.